The primary structure comprises 293 residues: Cyclohexadienyl dehydrogenase (293 aa).

Residues 5-293 (KHIAIIGLGL…ALKTDHDIRP (289 aa)) enclose the Prephenate/arogenate dehydrogenase domain. Position 6-30 (6-30 (HIAIIGLGLIGSSAARATKAYCPDV)) interacts with NAD(+).

The protein belongs to the prephenate/arogenate dehydrogenase family. Homodimer.

The enzyme catalyses L-arogenate + NAD(+) = L-tyrosine + CO2 + NADH. It catalyses the reaction prephenate + NAD(+) = 3-(4-hydroxyphenyl)pyruvate + CO2 + NADH. It functions in the pathway amino-acid biosynthesis; L-tyrosine biosynthesis; (4-hydroxyphenyl)pyruvate from prephenate (NAD(+) route): step 1/1. It participates in amino-acid biosynthesis; L-tyrosine biosynthesis; L-tyrosine from L-arogenate (NAD(+) route): step 1/1. Insensitive to feedback inhibition by L-tyrosine. Can function as either prephenate dehydrogenase or as arogenate dehydrogenase in the biosynthesis of L-tyrosine. Catalyzes two analogous reactions: converts prephenate to 4-hydroxyphenylpyruvate and transforms L-arogenate to L-tyrosine. Is not able to utilize NADP(+) instead of NAD(+) as cosubstrate. This is Cyclohexadienyl dehydrogenase from Zymomonas mobilis subsp. mobilis (strain ATCC 31821 / ZM4 / CP4).